We begin with the raw amino-acid sequence, 119 residues long: Ribonuclease P protein component (119 aa).

This sequence belongs to the RnpA family. In terms of assembly, consists of a catalytic RNA component (M1 or rnpB) and a protein subunit.

It carries out the reaction Endonucleolytic cleavage of RNA, removing 5'-extranucleotides from tRNA precursor.. RNaseP catalyzes the removal of the 5'-leader sequence from pre-tRNA to produce the mature 5'-terminus. It can also cleave other RNA substrates such as 4.5S RNA. The protein component plays an auxiliary but essential role in vivo by binding to the 5'-leader sequence and broadening the substrate specificity of the ribozyme. The polypeptide is Ribonuclease P protein component (Haemophilus influenzae (strain 86-028NP)).